The sequence spans 481 residues: 1-acylglycerol-3-phosphate O-acyltransferase PNPLA3 (481 aa).

Topologically, residues 1–41 (MYDAERGWSLSFAGCGFLGFYHVGATRCLSEHAPHLLRDAR) are cytoplasmic. The 170-residue stretch at 10–179 (LSFAGCGFLG…SDNVPFIDAK (170 aa)) folds into the PNPLA domain. The GXGXXG signature appears at 14–19 (GCGFLG). The chain crosses the membrane as a helical; Signal-anchor for type II membrane protein span at residues 42-62 (MLFGASAGALHCVGVLSGIPL). Residues 45-49 (GASAG) carry the GXSXG motif. The active-site Nucleophile is Ser-47. At 63–481 (EQTLQVLSDL…FPSFSLEKSL (419 aa)) the chain is on the lumenal side. N-linked (GlcNAc...) asparagine glycosylation occurs at Asn-89. Asp-166 functions as the Proton acceptor in the catalytic mechanism. Positions 166–168 (DGG) match the DGA/G motif. The N-linked (GlcNAc...) asparagine glycan is linked to Asn-280.

The protein localises to the membrane. The protein resides in the lipid droplet. The enzyme catalyses a 1-acyl-sn-glycero-3-phosphate + an acyl-CoA = a 1,2-diacyl-sn-glycero-3-phosphate + CoA. The catalysed reaction is a triacylglycerol + H2O = a diacylglycerol + a fatty acid + H(+). It catalyses the reaction a 1-acylglycerol + a 1,3-diacylglycerol = a triacylglycerol + glycerol. It carries out the reaction a 1-acylglycerol + a 1,2-diacylglycerol = a triacylglycerol + glycerol. The enzyme catalyses 2 a 1-acylglycerol = a 1,2-diacylglycerol + glycerol. The catalysed reaction is 1-(9Z-octadecenoyl)-sn-glycero-3-phosphate + (9Z)-octadecenoyl-CoA = 1,2-di-(9Z-octadecenoyl)-sn-glycero-3-phosphate + CoA. It catalyses the reaction 1-(9Z-octadecenoyl)-sn-glycero-3-phosphate + hexadecanoyl-CoA = 1-(9Z)-octadecenoyl-2-hexadecanoyl-sn-glycero-3-phosphate + CoA. It carries out the reaction 1-(9Z-octadecenoyl)-sn-glycero-3-phosphate + (9Z,12Z)-octadecadienoyl-CoA = 1-(9Z)-octadecenoyl-2-(9Z,12Z)-octadecadienoyl-sn-glycero-3-phosphate + CoA. The enzyme catalyses 1-(9Z-octadecenoyl)-sn-glycero-3-phosphate + (5Z,8Z,11Z,14Z)-eicosatetraenoyl-CoA = 1-(9Z)-octadecenoyl-2-(5Z,8Z,11Z,14Z)-eicosatetraenoyl-sn-glycero-3-phosphate + CoA. The catalysed reaction is 2 1-(9Z-octadecenoyl)-glycerol = 1,2-di-(9Z-octadecenoyl)-glycerol + glycerol. It catalyses the reaction 1-(9Z-octadecenoyl)-glycerol + 1,2-di-(9Z-octadecenoyl)-glycerol = 1,2,3-tri-(9Z-octadecenoyl)-glycerol + glycerol. It carries out the reaction 1-(9Z-octadecenoyl)-glycerol + 1,3-di-(9Z-octadecenoyl)-glycerol = 1,2,3-tri-(9Z-octadecenoyl)-glycerol + glycerol. The enzyme catalyses 1,2,3-tri-(9Z-octadecenoyl)-glycerol + H2O = 1,3-di-(9Z-octadecenoyl)-glycerol + (9Z)-octadecenoate + H(+). The catalysed reaction is a 1,2-diacyl-sn-glycero-3-phosphocholine + H2O = a 1-acyl-sn-glycero-3-phosphocholine + a fatty acid + H(+). It participates in phospholipid metabolism. Its pathway is glycerolipid metabolism. The triglyceride lipase activity is inhibited by BEL ((E)-6-(bromomethylene)-3-(1-naphthalenyl)-2H-tetrahydropyran-2-one), a suicide substrate inhibitor. Specifically catalyzes coenzyme A (CoA)-dependent acylation of 1-acyl-sn-glycerol 3-phosphate (2-lysophosphatidic acid/LPA) to generate phosphatidic acid (PA), an important metabolic intermediate and precursor for both triglycerides and glycerophospholipids. Does not esterify other lysophospholipids. Acyl donors are long chain (at least C16) fatty acyl-CoAs: arachidonoyl-CoA, linoleoyl-CoA, oleoyl-CoA and at a lesser extent palmitoyl-CoA. Additionally possesses low triacylglycerol lipase and CoA-independent acylglycerol transacylase activities and thus may play a role in acyl-chain remodeling of triglycerides. In vitro may express hydrolytic activity against glycerolipids triacylglycerol, diacylglycerol and monoacylglycerol, with a strong preference for oleic acid as the acyl moiety. However, the triacylglycerol hydrolase activity is controversial and may be very low. Possesses phospholipase A2 activity. This Homo sapiens (Human) protein is 1-acylglycerol-3-phosphate O-acyltransferase PNPLA3.